The sequence spans 186 residues: Thioredoxin M2, chloroplastic (186 aa).

The transit peptide at 1–72 (MAAFTCTSRP…RVSRLRRAVV (72 aa)) directs the protein to the chloroplast. The 114-residue stretch at 73–186 (CEAQETTTDI…LTSSLDKFLP (114 aa)) folds into the Thioredoxin domain. Residues C110 and C113 each act as nucleophile in the active site. Cysteines 110 and 113 form a disulfide.

The protein belongs to the thioredoxin family. Plant M-type subfamily. As to quaternary structure, interacts with G6PD1 and G6PD4. Interacts with PGL3.

The protein resides in the plastid. Its subcellular location is the chloroplast stroma. Its function is as follows. Thiol-disulfide oxidoreductase that may participate in various redox reactions. May activate NADP-malate dehydrogenase. The polypeptide is Thioredoxin M2, chloroplastic (Arabidopsis thaliana (Mouse-ear cress)).